The sequence spans 523 residues: Non-specific phospholipase C3 (523 aa).

The interval 44-64 (DGVSESEPRSNPLSTSDPNSA) is disordered. Residues 52–64 (RSNPLSTSDPNSA) are compositionally biased toward polar residues.

The protein belongs to the bacterial phospholipase C family. Expressed in root tips, cotyledons, on leaf margins, stems, young anthers and funiculus.

The enzyme catalyses a 1-acyl-sn-glycero-3-phosphate + H2O = a 1-acyl-sn-glycerol + phosphate. Its function is as follows. Possesses specific phosphatase activity toward lysophosphatidic acid (LPA) in vitro. Does not show phospholipase C activity. May play a role in signal transduction and storage lipid synthesis. May be involved in brassinolide-mediated signaling in root development. This is Non-specific phospholipase C3 (NPC3) from Arabidopsis thaliana (Mouse-ear cress).